The primary structure comprises 135 residues: Histone H3 (135 aa).

The disordered stretch occupies residues 1 to 40 (MARTKQTARKSTGGKAPRKAVATKARKTAPPVGGVKKPHR). Over residues 19–31 (KAVATKARKTAPP) the composition is skewed to low complexity.

Belongs to the histone H3 family. The nucleosome is a histone octamer containing two molecules each of H2A, H2B, H3 and H4 assembled in one H3-H4 heterotetramer and two H2A-H2B heterodimers. The octamer wraps approximately 147 bp of DNA.

It is found in the nucleus. The protein localises to the chromosome. Core component of nucleosome. Nucleosomes wrap and compact DNA into chromatin, limiting DNA accessibility to the cellular machineries which require DNA as a template. Histones thereby play a central role in transcription regulation, DNA repair, DNA replication and chromosomal stability. DNA accessibility is regulated via a complex set of post-translational modifications of histones, also called histone code, and nucleosome remodeling. This is Histone H3 from Mastigamoeba balamuthi (Phreatamoeba balamuthi).